The sequence spans 637 residues: Chaperone protein HtpG (637 aa).

An a; substrate-binding region spans residues 1-338 (MTSTIDKNGA…SADLPLNISR (338 aa)). Residues 339–552 (EMIQESPILA…ESGPDRQLEK (214 aa)) are b. Positions 553–637 (ILLGVGQLAG…LRRSSAGGGD (85 aa)) are c.

The protein belongs to the heat shock protein 90 family. In terms of assembly, homodimer.

Its subcellular location is the cytoplasm. In terms of biological role, molecular chaperone. Has ATPase activity. The polypeptide is Chaperone protein HtpG (Nitrobacter winogradskyi (strain ATCC 25391 / DSM 10237 / CIP 104748 / NCIMB 11846 / Nb-255)).